A 928-amino-acid chain; its full sequence is MAARGGAERAAGAGDGRRGQRRHLRPGRVLAALRGPAAPGAGGARAALAAALLWATWALLLAAPAAGRPATTPPAPPPEEAASPAPPASPSPPGPDGDDAASPDNSTDVRAALRLAQAAGENSRFFVCPPPSGATVVRLAPARPCPEYGLGRNYTEGIGVIYKENIAPYTFKAIIYYKNVIVTTTWAGSTYAAITNQYTDRVPVGMGEITDLVDKKWRCLSKAEYLRSGRKVVAFDRDDDPWEAPLKPARLSAPGVRGWHTTDDVYTALGSAGLYRTGTSVNCIVEEVEARSVYPYDSFALSTGDIIYMSPFYGLREGAHREHTSYSPERFQQIEGYYKRDMATGRRLKEPVSRNFLRTQHVTVAWDWVPKRKNVCSLAKWREADEMLRDESRGNFRFTARSLSATFVSDSHTFALQNVPLSDCVIEEAEAAVERVYRERYNGTHVLSGSLETYLARGGFVVAFRPMLSNELAKLYLQELARSNGTLEGLFAAAAPKPGPRRARRPRRLRPAPGRGQRARRRRHAGGRVTTVSLAEFAALQFTHDHTRTSEHHVHRLASPWCLLQNKERALWAEAAKLNPSAAASAALDRRAAARMLGDAMAVTYCHELGEGRCSSRTRMRAPGGVCYSRRGSFFGNESEPVEGQLGEDNELLPGRELVEPCTANHKRYFRFGADYVYYENYAYVRRVPLAELEVISTFVDLNLTVLEDREFLPLEVYTRAELADTGLLDYSEIQRRNQLHELRFYDIDRVVKTDGNMAIMRGLANFFQGLGAVGQAVGTVVLGAAGAALSTVSGIASFIANPFGALATGLLVLAGLVAAFLAYRYISRLRSNPMKALYPITTRALKDDPGRNRPGEEEEEFDAAKLEQAREMIKYMSLVSAVERQEHKAKKSNKAARLLATRLTQLALRRRAPPEYQQLPMADVGGA.

Positions Met1–Gly12 are enriched in low complexity. 2 disordered regions span residues Met1–Arg25 and Gly67–Asn105. The first 62 residues, Met1 to Ala62, serve as a signal peptide directing secretion. The Virion surface portion of the chain corresponds to Ala63–Pro803. Over residues Thr71–Pro95 the composition is skewed to pro residues. Asn105 and Asn153 each carry an N-linked (GlcNAc...) asparagine; by host glycan. 5 disulfides stabilise this stretch: Cys128/Cys606, Cys145/Cys562, Cys219/Cys283, Cys376/Cys424, and Cys627/Cys662. Involved in fusion and/or binding to host membrane stretches follow at residues Thr185–Tyr191 and Gly270–Thr277. N-linked (GlcNAc...) asparagine; by host glycosylation is found at Asn442 and Asn484. Residues Ala495–Ala525 are disordered. Over residues Gly499–Arg510 the composition is skewed to basic residues. N-linked (GlcNAc...) asparagine; by host glycans are attached at residues Asn637 and Asn703. 2 hydrophobic membrane proximal region regions span residues Ile748 to Ala801 and Val781 to Ala801. The chain crosses the membrane as a helical span at residues Phe804–Tyr824. At Arg825–Ala928 the chain is on the intravirion side. Positions Tyr876–Leu879 match the Golgi targeting motif. The Internalization motif motif lies at Tyr917 to Leu920.

It belongs to the herpesviridae glycoprotein B family. In terms of assembly, homotrimer; disulfide-linked. Binds to heparan sulfate proteoglycans. Interacts with gH/gL heterodimer. Post-translationally, a proteolytic cleavage by host furin generates two subunits that remain linked by disulfide bonds.

It localises to the virion membrane. The protein resides in the host cell membrane. It is found in the host endosome membrane. The protein localises to the host Golgi apparatus membrane. Its function is as follows. Envelope glycoprotein that forms spikes at the surface of virion envelope. Essential for the initial attachment to heparan sulfate moieties of the host cell surface proteoglycans. Involved in fusion of viral and cellular membranes leading to virus entry into the host cell. Following initial binding to its host receptors, membrane fusion is mediated by the fusion machinery composed at least of gB and the heterodimer gH/gL. May be involved in the fusion between the virion envelope and the outer nuclear membrane during virion egress. This chain is Envelope glycoprotein B, found in Bovine herpesvirus 1.1 (strain P8-2) (BoHV-1).